We begin with the raw amino-acid sequence, 802 residues long: LPS-assembly protein LptD (802 aa).

The N-terminal stretch at 1 to 25 (MARLFSLKPLVLALGLCFGTHCAAA) is a signal peptide.

Belongs to the LptD family. Component of the lipopolysaccharide transport and assembly complex. Interacts with LptE and LptA.

Its subcellular location is the cell outer membrane. In terms of biological role, together with LptE, is involved in the assembly of lipopolysaccharide (LPS) at the surface of the outer membrane. The protein is LPS-assembly protein LptD of Neisseria meningitidis serogroup B (strain ATCC BAA-335 / MC58).